A 65-amino-acid polypeptide reads, in one-letter code: Probable tautomerase RSp1151 (65 aa).

Catalysis depends on Pro-2, which acts as the Proton acceptor; via imino nitrogen.

This sequence belongs to the 4-oxalocrotonate tautomerase family.

The polypeptide is Probable tautomerase RSp1151 (Ralstonia nicotianae (strain ATCC BAA-1114 / GMI1000) (Ralstonia solanacearum)).